The sequence spans 355 residues: UPF0421 protein BCE_2776 (355 aa).

Helical transmembrane passes span 19–39, 74–94, 109–129, and 131–151; these read IAVFLTVLVCEFFNIPTIFAV, FTFFLGHQALSYALAAMFTIV, TLTAVAMIPITADHYFTAFLI, and LATTSTGIIVSTLVNFFILPP.

This sequence belongs to the UPF0421 family.

The protein resides in the cell membrane. The polypeptide is UPF0421 protein BCE_2776 (Bacillus cereus (strain ATCC 10987 / NRS 248)).